The following is a 169-amino-acid chain: Ribosome maturation factor RimM (169 aa).

Residues 94–168 (DDEFYHADLI…RIVADPPEGL (75 aa)) enclose the PRC barrel domain.

Belongs to the RimM family. In terms of assembly, binds ribosomal protein uS19.

It is found in the cytoplasm. Functionally, an accessory protein needed during the final step in the assembly of 30S ribosomal subunit, possibly for assembly of the head region. Essential for efficient processing of 16S rRNA. May be needed both before and after RbfA during the maturation of 16S rRNA. It has affinity for free ribosomal 30S subunits but not for 70S ribosomes. The protein is Ribosome maturation factor RimM of Cereibacter sphaeroides (strain ATCC 17029 / ATH 2.4.9) (Rhodobacter sphaeroides).